We begin with the raw amino-acid sequence, 596 residues long: Nitrite reductase (596 aa).

The signal sequence occupies residues 1–29 (MRQRTPFARPGLLASAALALVLGPLAASA). The interval 30–76 (QEQVAPPKDPAAALEDHKTRTDNRYEPSLDNLAQQDVAAPGAPEGVS) is N-terminal tail. H46 contacts heme c. Heme d1 is bound by residues Y54 and S57. One can recognise a Cytochrome c domain in the interval 77 to 162 (ALSDAQYNEA…ANYLLLDPAA (86 aa)). Residues C94, C97, H98, K108, and Y122 each contribute to the heme c site. Residues W138, R203, H229, R232, R245, R272, Y292, R420, Q536, and T583 each contribute to the heme d1 site. The D1-heme domain stretch occupies residues 163 to 596 (PPEFGMKEMR…NVYNTMTDTY (434 aa)).

In terms of assembly, homodimer. The cofactor is heme c. Requires heme as cofactor.

The protein localises to the periplasm. It carries out the reaction nitric oxide + Fe(III)-[cytochrome c] + H2O = Fe(II)-[cytochrome c] + nitrite + 2 H(+). The catalysed reaction is A + NH4(+) + H2O = hydroxylamine + AH2 + H(+). This is Nitrite reductase (nirS) from Paracoccus pantotrophus (Thiosphaera pantotropha).